Reading from the N-terminus, the 621-residue chain is tRNA uridine 5-carboxymethylaminomethyl modification enzyme MnmG (621 aa).

11–16 (GGGHAG) is an FAD binding site. 270–284 (GPRYCPSIEDKINRF) is an NAD(+) binding site.

It belongs to the MnmG family. In terms of assembly, homodimer. Heterotetramer of two MnmE and two MnmG subunits. FAD serves as cofactor.

The protein localises to the cytoplasm. NAD-binding protein involved in the addition of a carboxymethylaminomethyl (cmnm) group at the wobble position (U34) of certain tRNAs, forming tRNA-cmnm(5)s(2)U34. This is tRNA uridine 5-carboxymethylaminomethyl modification enzyme MnmG from Helicobacter pylori (strain Shi470).